A 253-amino-acid chain; its full sequence is Probable transcriptional regulatory protein KRH_13670 (253 aa).

Belongs to the TACO1 family.

The protein localises to the cytoplasm. The polypeptide is Probable transcriptional regulatory protein KRH_13670 (Kocuria rhizophila (strain ATCC 9341 / DSM 348 / NBRC 103217 / DC2201)).